The sequence spans 285 residues: NAD kinase (285 aa).

Asp66 (proton acceptor) is an active-site residue. NAD(+) is bound by residues 66–67, 137–138, Arg148, Arg165, Asp167, and 178–183; these read DG, ND, and TAYSLS.

Belongs to the NAD kinase family. A divalent metal cation is required as a cofactor.

It localises to the cytoplasm. The catalysed reaction is NAD(+) + ATP = ADP + NADP(+) + H(+). Its function is as follows. Involved in the regulation of the intracellular balance of NAD and NADP, and is a key enzyme in the biosynthesis of NADP. Catalyzes specifically the phosphorylation on 2'-hydroxyl of the adenosine moiety of NAD to yield NADP. In Chlorobium phaeobacteroides (strain BS1), this protein is NAD kinase.